Consider the following 103-residue polypeptide: Small ribosomal subunit protein uS10 (103 aa).

This sequence belongs to the universal ribosomal protein uS10 family. Part of the 30S ribosomal subunit.

Functionally, involved in the binding of tRNA to the ribosomes. This Dechloromonas aromatica (strain RCB) protein is Small ribosomal subunit protein uS10.